We begin with the raw amino-acid sequence, 522 residues long: Calcium-dependent protein kinase 14 (522 aa).

Composition is skewed to low complexity over residues 1–12 and 19–45; these read MGNCCPPGSSSE and SSGS…AAPA. Residues 1-58 are disordered; it reads MGNCCPPGSSSEPDPPPASSGSSRPAGSAGAAASPATISPSAAPAPAKPPAPIGPVLG. G2 carries the N-myristoyl glycine lipid modification. In terms of domain architecture, Protein kinase spans 68–326; it reads YTVGKELGRG…AYDVLNHPWI (259 aa). ATP contacts are provided by residues 74–82 and K97; that span reads LGRGQFGVT. The active-site Proton acceptor is D192. The segment at 332–362 is autoinhibitory domain; sequence APDTPLDNAVLGRLKQFRAMNQFKKAALRVI. 4 EF-hand domains span residues 369–404, 405–440, 441–476, and 480–511; these read EEIR…KGTK, LTEA…MNRM, DREE…KGLM, and EIKD…GDPE. Positions 382, 384, 386, 388, 393, 418, 420, 422, 424, 429, 454, 456, 458, 460, 465, 489, 491, 493, 495, and 500 each coordinate Ca(2+).

Belongs to the protein kinase superfamily. Ser/Thr protein kinase family. CDPK subfamily.

The protein resides in the membrane. The catalysed reaction is L-seryl-[protein] + ATP = O-phospho-L-seryl-[protein] + ADP + H(+). It carries out the reaction L-threonyl-[protein] + ATP = O-phospho-L-threonyl-[protein] + ADP + H(+). Its activity is regulated as follows. Activated by calcium. Autophosphorylation may play an important role in the regulation of the kinase activity. In terms of biological role, may play a role in signal transduction pathways that involve calcium as a second messenger. This chain is Calcium-dependent protein kinase 14, found in Oryza sativa subsp. japonica (Rice).